A 395-amino-acid polypeptide reads, in one-letter code: 8-amino-7-oxononanoate synthase (395 aa).

Residue 108–109 coordinates pyridoxal 5'-phosphate; the sequence is GF. H134 provides a ligand contact to substrate. Residues S184, 209–212, and 240–243 each bind pyridoxal 5'-phosphate; these read DDAH and TLSK. K243 carries the N6-(pyridoxal phosphate)lysine modification. T357 contributes to the substrate binding site.

It belongs to the class-II pyridoxal-phosphate-dependent aminotransferase family. BioF subfamily. As to quaternary structure, homodimer. Requires pyridoxal 5'-phosphate as cofactor.

The enzyme catalyses 6-carboxyhexanoyl-[ACP] + L-alanine + H(+) = (8S)-8-amino-7-oxononanoate + holo-[ACP] + CO2. It participates in cofactor biosynthesis; biotin biosynthesis. Catalyzes the decarboxylative condensation of pimeloyl-[acyl-carrier protein] and L-alanine to produce 8-amino-7-oxononanoate (AON), [acyl-carrier protein], and carbon dioxide. The protein is 8-amino-7-oxononanoate synthase of Fervidobacterium nodosum (strain ATCC 35602 / DSM 5306 / Rt17-B1).